Here is a 452-residue protein sequence, read N- to C-terminus: Keratin, type II cytoskeletal 80 (452 aa).

The segment at 1-82 (MAYRSCVVGF…DPAVQQQKNQ (82 aa)) is head. S45 carries the post-translational modification Phosphoserine. The interval 82-118 (QEKEEMKVLNDKFASLIGKVQALEQRNQLLETRWGFL) is coil 1A. Residues 83 to 394 (EKEEMKVLND…KLMEGEESRM (312 aa)) form the IF rod domain. Residues 119–135 (QGQGSATFDLSHHYETF) are linker 1. Residues 136–227 (QGRLQEELRK…TVYEQELKDL (92 aa)) form a coil 1B region. The tract at residues 228–251 (TAQVKDVSVTVGLDSRCHIDLSGI) is linker 12. The segment at 252 to 390 (VEEVKAQYDA…ATYHKLMEGE (139 aa)) is coil 2. Residues 391 to 452 (ESRMDLPSTT…YLSQESEASE (62 aa)) form a tail region. Composition is skewed to polar residues over residues 411–421 (TTASKSGLSKT) and 443–452 (YLSQESEASE). The tract at residues 411–452 (TTASKSGLSKTPSRKKKNRGGPVIKITEMSEKYLSQESEASE) is disordered.

This sequence belongs to the intermediate filament family. As to quaternary structure, heterotetramer of two type I and two type II keratins.

This Rattus norvegicus (Rat) protein is Keratin, type II cytoskeletal 80 (Krt80).